The chain runs to 324 residues: Putative F-box/kelch-repeat protein At5g28160 (324 aa).

In terms of domain architecture, F-box spans 7–54 (RPSFLSLPDEIILSCLARISRSYYPKLSLVCKTFRTLLISNELIVARL). A Kelch repeat occupies 170 to 216 (KIYVMGGCMADESVNWGEVFDIKTQTWEALPDPGPEFRFSSIRKIDV).

This Arabidopsis thaliana (Mouse-ear cress) protein is Putative F-box/kelch-repeat protein At5g28160.